Here is a 338-residue protein sequence, read N- to C-terminus: Protein REG2 (338 aa).

Residues 1-21 (MTLSNCDSLDNLFQDPPEEEE) are disordered.

Its function is as follows. Regulatory subunit, binds to type-1 protein phosphatase. Functions with HEX2/REG1 and SNF1 protein kinase to regulate growth. Might regulate SNF1 directly or indirectly. This Saccharomyces cerevisiae (strain ATCC 204508 / S288c) (Baker's yeast) protein is Protein REG2 (REG2).